Here is a 232-residue protein sequence, read N- to C-terminus: uncharacterized protein (232 aa).

This is an uncharacterized protein from Thermoproteus tenax (TTV1).